Consider the following 295-residue polypeptide: Elongation factor Ts (295 aa).

An involved in Mg(2+) ion dislocation from EF-Tu region spans residues 80–83; the sequence is TDFV.

It belongs to the EF-Ts family.

It localises to the cytoplasm. Functionally, associates with the EF-Tu.GDP complex and induces the exchange of GDP to GTP. It remains bound to the aminoacyl-tRNA.EF-Tu.GTP complex up to the GTP hydrolysis stage on the ribosome. The chain is Elongation factor Ts from Lysinibacillus sphaericus (strain C3-41).